The primary structure comprises 68 residues: uncharacterized protein (68 aa).

A signal peptide spans Met1–Ala27.

This is an uncharacterized protein from Invertebrate iridescent virus 6 (IIV-6).